The sequence spans 97 residues: U-scoloptoxin(10)-Ssd2a (97 aa).

The signal sequence occupies residues 1-23 (MNKSMLIFFTILFLTYIIEEKEA).

In terms of processing, contains 3 disulfide bonds. In terms of tissue distribution, expressed by the venom gland.

Its subcellular location is the secreted. The protein is U-scoloptoxin(10)-Ssd2a of Scolopendra dehaani (Thai centipede).